A 153-amino-acid polypeptide reads, in one-letter code: D-aminoacyl-tRNA deacylase (153 aa).

The short motif at 137–138 (GP) is the Gly-cisPro motif, important for rejection of L-amino acids element.

It belongs to the DTD family. In terms of assembly, homodimer.

It is found in the cytoplasm. The enzyme catalyses glycyl-tRNA(Ala) + H2O = tRNA(Ala) + glycine + H(+). The catalysed reaction is a D-aminoacyl-tRNA + H2O = a tRNA + a D-alpha-amino acid + H(+). An aminoacyl-tRNA editing enzyme that deacylates mischarged D-aminoacyl-tRNAs. Also deacylates mischarged glycyl-tRNA(Ala), protecting cells against glycine mischarging by AlaRS. Acts via tRNA-based rather than protein-based catalysis; rejects L-amino acids rather than detecting D-amino acids in the active site. By recycling D-aminoacyl-tRNA to D-amino acids and free tRNA molecules, this enzyme counteracts the toxicity associated with the formation of D-aminoacyl-tRNA entities in vivo and helps enforce protein L-homochirality. This Dehalococcoides mccartyi (strain ATCC BAA-2266 / KCTC 15142 / 195) (Dehalococcoides ethenogenes (strain 195)) protein is D-aminoacyl-tRNA deacylase.